The following is a 170-amino-acid chain: ATP synthase subunit b (170 aa).

A helical transmembrane segment spans residues 30-50; that stretch reads FFFVLAIFLVVLAVIGTFVVP.

Belongs to the ATPase B chain family. As to quaternary structure, F-type ATPases have 2 components, F(1) - the catalytic core - and F(0) - the membrane proton channel. F(1) has five subunits: alpha(3), beta(3), gamma(1), delta(1), epsilon(1). F(0) has three main subunits: a(1), b(2) and c(10-14). The alpha and beta chains form an alternating ring which encloses part of the gamma chain. F(1) is attached to F(0) by a central stalk formed by the gamma and epsilon chains, while a peripheral stalk is formed by the delta and b chains.

It localises to the cell membrane. Functionally, f(1)F(0) ATP synthase produces ATP from ADP in the presence of a proton or sodium gradient. F-type ATPases consist of two structural domains, F(1) containing the extramembraneous catalytic core and F(0) containing the membrane proton channel, linked together by a central stalk and a peripheral stalk. During catalysis, ATP synthesis in the catalytic domain of F(1) is coupled via a rotary mechanism of the central stalk subunits to proton translocation. Component of the F(0) channel, it forms part of the peripheral stalk, linking F(1) to F(0). This Mycobacterium marinum (strain ATCC BAA-535 / M) protein is ATP synthase subunit b.